Reading from the N-terminus, the 131-residue chain is Putative gamma-taxilin 2 (131 aa).

Belongs to the taxilin family.

The chain is Putative gamma-taxilin 2 (TXLNGY) from Pan troglodytes (Chimpanzee).